We begin with the raw amino-acid sequence, 1347 residues long: Protein HUA2-LIKE 3 (1347 aa).

The 58-residue stretch at 24–81 folds into the PWWP domain; sequence VGDLVLAKVKGFPAWPAVVDEPEKWGHSADSKKVTVHFFGTQQIAFCNHGDVESFTEE. Disordered stretches follow at residues 110-137, 251-320, and 383-402; these read KLKQ…TSQL, DGGP…SGSK, and DSCQ…PCEE. The segment covering 127-137 has biased composition (polar residues); sequence TAGSSGNTSQL. The span at 302–314 shows a compositional bias: low complexity; sequence VESNNNSRNEGNG. Basic and acidic residues predominate over residues 390 to 402; the sequence is NSHERLNERPCEE. The 142-residue stretch at 845–986 folds into the CID domain; it reads DVQCTVESFE…HHIRELDSLS (142 aa). Disordered regions lie at residues 1037 to 1069, 1121 to 1140, 1147 to 1223, and 1259 to 1347; these read RDED…VTPS, TSHQ…QNAQ, YSNG…YSYM, and RMRP…WHQR. Over residues 1038 to 1049 the composition is skewed to acidic residues; sequence DEDEGSDSDGGD. A compositionally biased stretch (basic and acidic residues) spans 1054–1069; that stretch reads TPEHESRSLEEHVTPS. Positions 1181 to 1191 are enriched in polar residues; it reads PSYSSRVSLSK. Residues 1208–1217 are compositionally biased toward pro residues; that stretch reads SSHPPPPPPS. Residues 1259–1272 are compositionally biased toward basic and acidic residues; it reads RMRPEPCENRDNWR.

In terms of tissue distribution, expressed throughout young primordia, and vegetative and reproductive apices.

The protein resides in the nucleus. Its function is as follows. Probable transcription factor that acts with partial redundancy with HULK1 and HULK2. Plays diverse and essential roles in the control of plant development, physiology and flowering time. The polypeptide is Protein HUA2-LIKE 3 (Arabidopsis thaliana (Mouse-ear cress)).